We begin with the raw amino-acid sequence, 365 residues long: Ubiquitin carboxyl-terminal hydrolase 4 (365 aa).

G2 carries the N-myristoyl glycine lipid modification. A USP domain is found at 23–362 (FGFENFGNTC…HGYILLYESL (340 aa)). The Nucleophile role is filled by C32. The Bipartite nuclear localization signal signature appears at 81–98 (KKKTGVIAPKRFVQRLKK). The active-site Proton acceptor is H310.

Belongs to the peptidase C19 family. As to expression, constitutively and ubiquitously expressed.

The protein resides in the nucleus. The catalysed reaction is Thiol-dependent hydrolysis of ester, thioester, amide, peptide and isopeptide bonds formed by the C-terminal Gly of ubiquitin (a 76-residue protein attached to proteins as an intracellular targeting signal).. Its function is as follows. Recognizes and hydrolyzes the peptide bond at the C-terminal Gly of ubiquitin. Involved in the processing of poly-ubiquitin precursors as well as that of ubiquitinated proteins. Required for the correct development of pollen. This is Ubiquitin carboxyl-terminal hydrolase 4 (UBP4) from Arabidopsis thaliana (Mouse-ear cress).